Consider the following 266-residue polypeptide: Glutamate racemase (266 aa).

Residues 9 to 10 (DS) and 41 to 42 (YG) each bind substrate. C72 (proton donor/acceptor) is an active-site residue. 73-74 (NT) contributes to the substrate binding site. The active-site Proton donor/acceptor is the C184. 185-186 (TH) is a binding site for substrate.

The protein belongs to the aspartate/glutamate racemases family.

It carries out the reaction L-glutamate = D-glutamate. The protein operates within cell wall biogenesis; peptidoglycan biosynthesis. In terms of biological role, provides the (R)-glutamate required for cell wall biosynthesis. This chain is Glutamate racemase, found in Staphylococcus aureus (strain Mu3 / ATCC 700698).